Reading from the N-terminus, the 1246-residue chain is Stromal processing peptidase, chloroplastic (1246 aa).

The N-terminal 136 residues, M1–H136, are a transit peptide targeting the chloroplast. H228 is a binding site for Zn(2+). E231 functions as the Proton acceptor in the catalytic mechanism. H232 serves as a coordination point for Zn(2+). E302 is a catalytic residue. E309 provides a ligand contact to Zn(2+).

This sequence belongs to the peptidase M16 family. The cofactor is Zn(2+). Widely expressed.

It is found in the plastid. The protein resides in the chloroplast stroma. Functionally, cleaves presequences (transit peptides) from chloroplastic protein precursors. Initially recognizes a precursor by binding to the C-terminus of its transit peptide and then removes the transit peptide in a single endoproteolytic step. In a next step, pursues the cleavage of transit peptide to a subfragment form. The sequence is that of Stromal processing peptidase, chloroplastic from Oryza sativa subsp. indica (Rice).